Consider the following 480-residue polypeptide: Transmembrane protein 161A (480 aa).

The signal sequence occupies residues 1–28 (MAVLGVQLVVTLFTATLMHRLAPHCSFA). At 29 to 98 (RWLLCNGSLF…LTAVDALVLR (70 aa)) the chain is on the extracellular side. N34 carries an N-linked (GlcNAc...) asparagine glycan. Residues 99–119 (FFLEYQWFVDFAVYSVGVYLF) traverse the membrane as a helical segment. Residues 120–134 (TEAYYFVLGPVQETN) lie on the Cytoplasmic side of the membrane. Residues 135 to 155 (IAVFWCLLTLAFSLKVFLMVT) form a helical membrane-spanning segment. The Extracellular portion of the chain corresponds to 156 to 166 (RLYFSTKEGGE). Residues 167–187 (RSVCLSFAFLFLLLAMLVQVV) traverse the membrane as a helical segment. Residues 188 to 224 (REETLELGLEPGLASMTQHLEPILKKQDWDWTLPVIK) are Cytoplasmic-facing. Residues 225-245 (LAIRLGLAVLGSLLGAFLIFP) form a helical membrane-spanning segment. Topologically, residues 246–263 (GLRLAQTHQDALTLSADR) are extracellular. The helical transmembrane segment at 264 to 284 (PLLQLLLHTSFLSPLCTLWLW) threads the bilayer. Topologically, residues 285 to 304 (TKPVARDFLYQAPTRNMTFS) are cytoplasmic. Residues 305-325 (VPSEGAFDSLRLWVLVALCLL) traverse the membrane as a helical segment. Residues 326-370 (RLAVTRPHLQAYLCLAKARVEQLRKEAGRIEAREIQQRVVRVYCY) lie on the Extracellular side of the membrane. A helical transmembrane segment spans residues 371–391 (VTVVSLQYLTPLILTLHCTLL). The Cytoplasmic segment spans residues 392–450 (LKTLGGYSWALSSTPPPLAPSQPSEALIPVDPAGDEAQQTAAQVAGILGGLLTPLFLRG). The chain crosses the membrane as a helical span at residues 451 to 473 (MLAYIIWWTAACQLLSSLFGLYF). Residues 474–480 (HQHLAAS) lie on the Extracellular side of the membrane.

Belongs to the TMEM161 family.

It localises to the membrane. In terms of biological role, may play a role in protection against oxidative stress. Overexpression leads to reduced levels of oxidant-induced DNA damage and apoptosis. The protein is Transmembrane protein 161A (Tmem161a) of Mus musculus (Mouse).